We begin with the raw amino-acid sequence, 393 residues long: NAD(P)H-quinone oxidoreductase subunit H, chloroplastic (393 aa).

The protein belongs to the complex I 49 kDa subunit family. NDH is composed of at least 16 different subunits, 5 of which are encoded in the nucleus.

It is found in the plastid. It localises to the chloroplast thylakoid membrane. It catalyses the reaction a plastoquinone + NADH + (n+1) H(+)(in) = a plastoquinol + NAD(+) + n H(+)(out). The catalysed reaction is a plastoquinone + NADPH + (n+1) H(+)(in) = a plastoquinol + NADP(+) + n H(+)(out). NDH shuttles electrons from NAD(P)H:plastoquinone, via FMN and iron-sulfur (Fe-S) centers, to quinones in the photosynthetic chain and possibly in a chloroplast respiratory chain. The immediate electron acceptor for the enzyme in this species is believed to be plastoquinone. Couples the redox reaction to proton translocation, and thus conserves the redox energy in a proton gradient. The polypeptide is NAD(P)H-quinone oxidoreductase subunit H, chloroplastic (Anthoceros angustus (Hornwort)).